A 339-amino-acid chain; its full sequence is Pre-mRNA-splicing factor syf2 (339 aa).

A disordered region spans residues 1 to 136; sequence MPPEKKRKTE…LQSDPSQLTA (136 aa). The span at 7–16 shows a compositional bias: basic and acidic residues; the sequence is RKTEPEDKAE. Positions 17-37 are enriched in polar residues; that stretch reads VTQQENDVAESTTEPNNQTVT. Residues 45–93 are compositionally biased toward low complexity; it reads VTEAALATTSSSSPPVLSASETAQPDTAATSQSSSTPPTSTSAAESAAA. Residues 94-103 show a composition bias toward basic and acidic residues; that stretch reads KARERAERFR. The segment covering 126 to 135 has biased composition (polar residues); the sequence is RLQSDPSQLT.

Belongs to the SYF2 family. In terms of assembly, associated with the spliceosome.

It is found in the nucleus. Involved in pre-mRNA splicing. The polypeptide is Pre-mRNA-splicing factor syf2 (msp-4) (Neurospora crassa (strain ATCC 24698 / 74-OR23-1A / CBS 708.71 / DSM 1257 / FGSC 987)).